The primary structure comprises 193 residues: CASP-like protein 1F3 (193 aa).

The disordered stretch occupies residues 1–25 (MASPQNTSQKRFFQANSPGGMPTAS). Topologically, residues 1-35 (MASPQNTSQKRFFQANSPGGMPTASQSQRSRILAQ) are cytoplasmic. The chain crosses the membrane as a helical span at residues 36–56 (ITLRFLAIAFTVTAIPVMITA). At 57-78 (KEPVSLLGLAITPSYKQSSAMK) the chain is on the extracellular side. A helical membrane pass occupies residues 79 to 99 (FLLGVNATVFAFTALSMLFVW). The Cytoplasmic portion of the chain corresponds to 100–118 (PLRRSGSKPINYFFLHLHD). The helical transmembrane segment at 119-139 (MVMTLLLISGCAAATAVGYLS) threads the bilayer. The Extracellular portion of the chain corresponds to 140 to 161 (QYGQPETYWSPICDIVKKFCHQ). A helical membrane pass occupies residues 162–182 (MLISTVLSYLAFFCYLALNIL). Over 183-193 (SVHKLMSRATE) the chain is Cytoplasmic.

Belongs to the Casparian strip membrane proteins (CASP) family. In terms of assembly, homodimer and heterodimers.

Its subcellular location is the cell membrane. The chain is CASP-like protein 1F3 from Populus trichocarpa (Western balsam poplar).